A 180-amino-acid polypeptide reads, in one-letter code: Large ribosomal subunit protein uL5 (180 aa).

It belongs to the universal ribosomal protein uL5 family. Part of the 50S ribosomal subunit; part of the 5S rRNA/L5/L18/L25 subcomplex. Contacts the 5S rRNA and the P site tRNA. Forms a bridge to the 30S subunit in the 70S ribosome.

Its function is as follows. This is one of the proteins that bind and probably mediate the attachment of the 5S RNA into the large ribosomal subunit, where it forms part of the central protuberance. In the 70S ribosome it contacts protein S13 of the 30S subunit (bridge B1b), connecting the 2 subunits; this bridge is implicated in subunit movement. Contacts the P site tRNA; the 5S rRNA and some of its associated proteins might help stabilize positioning of ribosome-bound tRNAs. This chain is Large ribosomal subunit protein uL5, found in Roseiflexus castenholzii (strain DSM 13941 / HLO8).